We begin with the raw amino-acid sequence, 213 residues long: Ion-translocating oxidoreductase complex subunit E (213 aa).

A run of 6 helical transmembrane segments spans residues 25 to 45 (TFGL…VENG), 46 to 66 (IGMA…VSAI), 77 to 97 (PVEI…MEAF), 100 to 120 (DLYT…IVIG), 135 to 155 (IIDA…IGGI), and 181 to 201 (AMFM…MTIV).

The protein belongs to the NqrDE/RnfAE family. As to quaternary structure, the Rnf complex is probably composed of eight subunits, including RnfA, RnfB, RnfC, RnfD, RnfE and RnfG.

The protein localises to the cell membrane. Part of a membrane-bound complex that couples electron transfer with translocation of ions across the membrane. Catalyzes Na(+) transport, most probably coupled to electron transfer from reduced ferredoxin to methanophenazine and heterodisulfide reductase. Involved in heterodisulfide reduction during methanogenesis from acetate. The sequence is that of Ion-translocating oxidoreductase complex subunit E from Methanosarcina acetivorans (strain ATCC 35395 / DSM 2834 / JCM 12185 / C2A).